A 712-amino-acid chain; its full sequence is Autophagy-related protein 13 (712 aa).

Disordered stretches follow at residues 388 to 443 (AGST…ETPP) and 568 to 611 (GSVG…DDDE). A compositionally biased stretch (low complexity) spans 402-415 (SSVGSGSKYSSSFG). Positions 412–420 (SSFGRIRRH) are ATG17-binding. The span at 424-439 (RRSESIDRTAKPRKSN) shows a compositional bias: basic and acidic residues. An ATG1-binding region spans residues 441–500 (TPPEDLLEFVKLLEDKKELNMKPSTILPQQDISSSLIKFQSMKPNNDTLSDNLSMSMSID). Residues 576–585 (TNEDSKEDED) show a composition bias toward acidic residues.

It belongs to the ATG13 family. Fungi subfamily. As to quaternary structure, hypophosphorylated form interacts with ATG1 to form the ATG1-ATG13 kinase complex. The ATG1-ATG13 complex interacts with the ATG17-ATG29-ATG31 complex through direct interaction with ATG17. Interacts with VAC8. Post-translationally, hyperphosphorylated under nutrient-rich conditions. Starvation and TOR inactivation results in ATG13 partial dephosphorylation leading to ATG1-binding. Dephosphorylation induces ATG17-binding.

The protein resides in the cytoplasm. The protein localises to the preautophagosomal structure. Its function is as follows. Activates the ATG1 kinase in a nutritional condition dependent manner through the TOR pathway, leading to autophagy. Involved in ATG9 and ATG23 cycling through the pre-autophagosomal structure. Also involved in cytoplasm to vacuole transport (Cvt) and more specifically in Cvt vesicle formation. Seems to play a role in the switching machinery regulating the conversion between the Cvt pathway and autophagy. Finally, ATG13 is also required for glycogen storage during stationary phase. The sequence is that of Autophagy-related protein 13 from Kluyveromyces marxianus (strain DMKU3-1042 / BCC 29191 / NBRC 104275) (Yeast).